The primary structure comprises 359 residues: Phosphoribosylformylglycinamidine cyclo-ligase (359 aa).

It belongs to the AIR synthase family.

It localises to the cytoplasm. It catalyses the reaction 2-formamido-N(1)-(5-O-phospho-beta-D-ribosyl)acetamidine + ATP = 5-amino-1-(5-phospho-beta-D-ribosyl)imidazole + ADP + phosphate + H(+). It functions in the pathway purine metabolism; IMP biosynthesis via de novo pathway; 5-amino-1-(5-phospho-D-ribosyl)imidazole from N(2)-formyl-N(1)-(5-phospho-D-ribosyl)glycinamide: step 2/2. In Brucella canis (strain ATCC 23365 / NCTC 10854 / RM-666), this protein is Phosphoribosylformylglycinamidine cyclo-ligase.